The following is a 206-amino-acid chain: MRLTQKQIVWLKVLLHLAGLLPFLWLVWAVNQGGLSADPVKDIQHFTGRTALKFLLATLLVSPLARYAKQPLLIRTRRLLGLWCFAWATLHLTSYALLELGINNLALLGQELITRPYLTLGIISWFILFALTLTSTQAAQRKLGKRWQRLHNFVYLVAILAPIHYLWSVKILSPQPVIYALLALVLLAWRYKTFRQWWRSFAGKML.

4 consecutive transmembrane segments (helical) span residues 8–28, 82–102, 116–136, and 153–173; these read IVWLKVLLHLAGLLPFLWLVW, LWCFAWATLHLTSYALLELGI, PYLTLGIISWFILFALTLTST, and FVYLVAILAPIHYLWSVKILS.

This sequence belongs to the MsrQ family. In terms of assembly, heterodimer of a catalytic subunit (MsrP) and a heme-binding subunit (MsrQ). It depends on FMN as a cofactor. Heme b is required as a cofactor.

It is found in the cell inner membrane. Its function is as follows. Part of the MsrPQ system that repairs oxidized periplasmic proteins containing methionine sulfoxide residues (Met-O), using respiratory chain electrons. Thus protects these proteins from oxidative-stress damage caused by reactive species of oxygen and chlorine generated by the host defense mechanisms. MsrPQ is essential for the maintenance of envelope integrity under bleach stress, rescuing a wide series of structurally unrelated periplasmic proteins from methionine oxidation. MsrQ provides electrons for reduction to the reductase catalytic subunit MsrP, using the quinone pool of the respiratory chain. The polypeptide is Protein-methionine-sulfoxide reductase heme-binding subunit MsrQ (Citrobacter koseri (strain ATCC BAA-895 / CDC 4225-83 / SGSC4696)).